A 152-amino-acid chain; its full sequence is Protein CHLOROPLAST VESICULATION (152 aa).

The transit peptide at 1 to 22 directs the protein to the chloroplast; it reads MAGRISCCLNLPPLDSNSAQSL. Residues 48–65 traverse the membrane as a helical segment; that stretch reads CSFVLGVAATVVIGGIQI. Residues 92-152 form an important for chloroplast destabilization and the formation of CV-containing vesicles region; sequence RWSDKRTCPP…RVNRGGCFSV (61 aa).

Interacts with the photosystem II subunit PsbO1 via its C-terminal region in the chloroplast thylakoid membrane and in CV-containing vesicles (CCVs). In terms of tissue distribution, mostly expressed in senescent and mature leaves but not in young leaves.

The protein localises to the plastid. It localises to the chloroplast membrane. Its subcellular location is the chloroplast thylakoid membrane. The protein resides in the chloroplast envelope. It is found in the vacuole. The protein localises to the vesicle. In terms of biological role, triggers stress-induced chloroplast degradation, independently of autophagy and senescence-associated vacuoles. After targeting to the chloroplast, triggers its destabilization and subsequent disassembly, inducing the formation of CV-containing vesicles (CCVs) carrying stromal proteins, envelope membrane proteins, and thylakoid membrane proteins which are released from the chloroplasts and mobilized to the vacuole for proteolysis. This is Protein CHLOROPLAST VESICULATION from Arabidopsis thaliana (Mouse-ear cress).